The chain runs to 442 residues: ATP-dependent protease ATPase subunit HslU (442 aa).

ATP is bound by residues I18, 60–65 (GVGKTE), D255, E320, and R392.

Belongs to the ClpX chaperone family. HslU subfamily. In terms of assembly, a double ring-shaped homohexamer of HslV is capped on each side by a ring-shaped HslU homohexamer. The assembly of the HslU/HslV complex is dependent on binding of ATP.

Its subcellular location is the cytoplasm. Its function is as follows. ATPase subunit of a proteasome-like degradation complex; this subunit has chaperone activity. The binding of ATP and its subsequent hydrolysis by HslU are essential for unfolding of protein substrates subsequently hydrolyzed by HslV. HslU recognizes the N-terminal part of its protein substrates and unfolds these before they are guided to HslV for hydrolysis. This Aeromonas salmonicida (strain A449) protein is ATP-dependent protease ATPase subunit HslU.